Consider the following 96-residue polypeptide: Aspartyl/glutamyl-tRNA(Asn/Gln) amidotransferase subunit C (96 aa).

This sequence belongs to the GatC family. Heterotrimer of A, B and C subunits.

It carries out the reaction L-glutamyl-tRNA(Gln) + L-glutamine + ATP + H2O = L-glutaminyl-tRNA(Gln) + L-glutamate + ADP + phosphate + H(+). It catalyses the reaction L-aspartyl-tRNA(Asn) + L-glutamine + ATP + H2O = L-asparaginyl-tRNA(Asn) + L-glutamate + ADP + phosphate + 2 H(+). Functionally, allows the formation of correctly charged Asn-tRNA(Asn) or Gln-tRNA(Gln) through the transamidation of misacylated Asp-tRNA(Asn) or Glu-tRNA(Gln) in organisms which lack either or both of asparaginyl-tRNA or glutaminyl-tRNA synthetases. The reaction takes place in the presence of glutamine and ATP through an activated phospho-Asp-tRNA(Asn) or phospho-Glu-tRNA(Gln). The protein is Aspartyl/glutamyl-tRNA(Asn/Gln) amidotransferase subunit C of Chloroflexus aggregans (strain MD-66 / DSM 9485).